We begin with the raw amino-acid sequence, 142 residues long: DNA-directed RNA polymerases I, II, and III subunit rpabc3 (142 aa).

Residues Asp-16 to Gln-40 are non-specific ssDNA binding.

This sequence belongs to the eukaryotic RPB8 RNA polymerase subunit family. Component of the RNA polymerase I (Pol I), RNA polymerase II (Pol II) and RNA polymerase III (Pol III) complexes consisting of at least 13, 12 and 17 subunits, respectively. Directly interacts with POLR2A.

Its subcellular location is the nucleus. It localises to the nucleolus. In terms of biological role, DNA-dependent RNA polymerase catalyzes the transcription of DNA into RNA using the four ribonucleoside triphosphates as substrates. Common component of RNA polymerases I, II and III which synthesize ribosomal RNA precursors, mRNA precursors and many functional non-coding RNAs, and small RNAs, such as 5S rRNA and tRNAs, respectively. The sequence is that of DNA-directed RNA polymerases I, II, and III subunit rpabc3 (polr2h) from Dictyostelium discoideum (Social amoeba).